The chain runs to 236 residues: Uridylate kinase (236 aa).

8 to 11 (KLSG) contacts ATP. Gly-51 provides a ligand contact to UMP. ATP is bound by residues Gly-52 and Arg-56. UMP is bound by residues Asp-71 and 133–140 (TGRPFFTT). Residues Asn-161, Phe-167, and Asp-170 each contribute to the ATP site.

This sequence belongs to the UMP kinase family. As to quaternary structure, homohexamer.

The protein resides in the cytoplasm. The enzyme catalyses UMP + ATP = UDP + ADP. Its pathway is pyrimidine metabolism; CTP biosynthesis via de novo pathway; UDP from UMP (UMPK route): step 1/1. Its activity is regulated as follows. Inhibited by UTP. In terms of biological role, catalyzes the reversible phosphorylation of UMP to UDP. The chain is Uridylate kinase from Mesomycoplasma hyopneumoniae (strain 232) (Mycoplasma hyopneumoniae).